Consider the following 99-residue polypeptide: C-C motif chemokine 8 (99 aa).

An N-terminal signal peptide occupies residues 1-23 (MKVSAGILCLLLVAATFGTQVLA). Pyrrolidone carboxylic acid is present on Gln-24. Intrachain disulfides connect Cys-34–Cys-59 and Cys-35–Cys-75.

Belongs to the intercrine beta (chemokine CC) family. As to quaternary structure, monomer or homodimer; in equilibrium.

The protein resides in the secreted. Functionally, chemotactic factor that attracts monocytes. This protein can bind heparin. This Bos taurus (Bovine) protein is C-C motif chemokine 8 (CCL8).